A 156-amino-acid polypeptide reads, in one-letter code: Neuroactive polyprotein R15 (156 aa).

The first 26 residues, 1 to 26 (MDSAGLHINFRLSHVLTVVTCILYIL), serve as a signal peptide directing secretion. Residues 27–48 (PPTTTAYSLPAPGKAAFQHQLS) constitute a propeptide that is removed on maturation. Cys-74 and Cys-81 are joined by a disulfide. Residue Gln-120 is modified to Pyrrolidone carboxylic acid.

In terms of tissue distribution, expressed within the abdominal ganglion in neurons R15, RB(HE), the two L9(G) gill motoneurons, and L40 interneuron, all are parts of autonomic control circuit that contributes to implementing a central command to coordinate autonomic activity with escape locomotion.

The protein localises to the secreted. The alpha-1 peptide acts as an osmoregulatory peptide, increasing blood volume, and also modulates the activity of a set of cardiac motor neurons that control heart rate. This chain is Neuroactive polyprotein R15, found in Aplysia californica (California sea hare).